Here is a 255-residue protein sequence, read N- to C-terminus: Ornithine decarboxylase antizyme (255 aa).

It belongs to the ODC antizyme family. In terms of assembly, interacts with ODC and thereby sterically blocks ODC homodimerization.

Ornithine decarboxylase (ODC) antizyme protein that negatively regulates ODC activity and intracellular polyamine biosynthesis in response to increased intracellular polyamine levels. Binds to ODC monomers, inhibiting the assembly of the functional ODC homodimer, and targets the monomers for ubiquitin-independent proteolytic destruction by the 26S proteasome. The sequence is that of Ornithine decarboxylase antizyme (OAZ1) from Candida glabrata (strain ATCC 2001 / BCRC 20586 / JCM 3761 / NBRC 0622 / NRRL Y-65 / CBS 138) (Yeast).